The following is a 430-amino-acid chain: Probable FAD-dependent monooxygenase (430 aa).

A signal peptide spans 1–23 (MGSTSTPPHVLIIGAGITGLALA). 9-37 (HVLIIGAGITGLALAQALRKHGVSFAVYE) serves as a coordination point for FAD. Asn130 and Asn151 each carry an N-linked (GlcNAc...) asparagine glycan. Position 307 to 330 (307 to 330 (LEDWPTPPKGSWSNLGGTATLVGD)) interacts with FAD.

Requires FAD as cofactor.

The polypeptide is Probable FAD-dependent monooxygenase (Arthroderma benhamiae (strain ATCC MYA-4681 / CBS 112371) (Trichophyton mentagrophytes)).